Reading from the N-terminus, the 255-residue chain is Ly6/PLAUR domain-containing protein 8 (255 aa).

The signal sequence occupies residues 1–20; sequence MRGVFIAGVIAAFAITVVDS. Asn-22, Asn-30, Asn-53, Asn-72, Asn-76, Asn-105, Asn-115, Asn-128, Asn-154, Asn-169, Asn-179, Asn-200, and Asn-210 each carry an N-linked (GlcNAc...) asparagine glycan. Residues 121-170 form the UPAR/Ly6 domain; that stretch reads CMSCYGHNKTLCEEKPQKCYEGEQCVFIIAEMVNGSGRVELKGCSDISNS. The GPI-anchor amidated serine moiety is linked to residue Ser-233. Residues 234–255 constitute a propeptide, removed in mature form; the sequence is MGTKASFTSSIFGSLLLLKLLF.

Belongs to the CNF-like-inhibitor family. Highly N-glycosylated. Not O-glycosylated. Post-translationally, GPI-anchored. The GPI-anchor is cleaved, leading to secretion into the colonic lumen. In terms of tissue distribution, specifically present in enterocytes located at the uppermost epithelial layer of the colon (at protein level). Exclusively expressed in the large intestine: specifically expressed on the apical surface of epithelial cells located at the uppermost layer of the colonic gland.

The protein resides in the cell membrane. Its subcellular location is the secreted. Its function is as follows. Secreted protein specifically required to prevent invasion of Gram-negative bacteria in the inner mucus layer of the colon epithelium, a portion of the large intestine which is free of commensal microbiota. Prevents invasion of flagellated microbiota by binding to the flagellum of bacteria, such as P.mirabilis, thereby inhibiting bacterial motility in the intestinal lumen. Segregation of intestinal bacteria and epithelial cells in the colon is required to preserve intestinal homeostasis. The protein is Ly6/PLAUR domain-containing protein 8 of Mus musculus (Mouse).